The sequence spans 341 residues: Probable UDP-glucuronate 4-epimerase (341 aa).

Catalysis depends on Tyr-152, which acts as the Proton acceptor.

Belongs to the NAD(P)-dependent epimerase/dehydratase family. It depends on NAD(+) as a cofactor.

The enzyme catalyses UDP-alpha-D-glucuronate = UDP-alpha-D-galacturonate. This Rhizobium meliloti (strain 1021) (Ensifer meliloti) protein is Probable UDP-glucuronate 4-epimerase.